The chain runs to 271 residues: Shikimate dehydrogenase (NADP(+)) (271 aa).

Shikimate-binding positions include 14–16 and T61; that span reads SRS. K65 serves as the catalytic Proton acceptor. Positions 86 and 102 each coordinate shikimate. Residues 126–130, 149–154, and M213 contribute to the NADP(+) site; these read GAGGA and NRTFSR. Y215 serves as a coordination point for shikimate. G238 is an NADP(+) binding site.

The protein belongs to the shikimate dehydrogenase family. In terms of assembly, homodimer.

The enzyme catalyses shikimate + NADP(+) = 3-dehydroshikimate + NADPH + H(+). The protein operates within metabolic intermediate biosynthesis; chorismate biosynthesis; chorismate from D-erythrose 4-phosphate and phosphoenolpyruvate: step 4/7. Involved in the biosynthesis of the chorismate, which leads to the biosynthesis of aromatic amino acids. Catalyzes the reversible NADPH linked reduction of 3-dehydroshikimate (DHSA) to yield shikimate (SA). The protein is Shikimate dehydrogenase (NADP(+)) of Histophilus somni (strain 129Pt) (Haemophilus somnus).